The primary structure comprises 115 residues: U3-lycotoxin-Ls1c (115 aa).

The signal sequence occupies residues 1-20 (MKFVLLFGVLLVTLFSYSSA). A propeptide spanning residues 21 to 44 (EMLDDFDQADEDELLSLIEKEEAR) is cleaved from the precursor. 4 cysteine pairs are disulfide-bonded: cysteine 48–cysteine 63, cysteine 55–cysteine 72, cysteine 62–cysteine 87, and cysteine 74–cysteine 85.

Belongs to the neurotoxin 19 (CSTX) family. 01 subfamily. As to expression, expressed by the venom gland.

The protein resides in the secreted. In Lycosa singoriensis (Wolf spider), this protein is U3-lycotoxin-Ls1c.